The sequence spans 487 residues: Glutamyl-tRNA(Gln) amidotransferase subunit A (487 aa).

Residues Lys-80 and Ser-155 each act as charge relay system in the active site. Ser-179 functions as the Acyl-ester intermediate in the catalytic mechanism.

The protein belongs to the amidase family. GatA subfamily. In terms of assembly, heterotrimer of A, B and C subunits.

The catalysed reaction is L-glutamyl-tRNA(Gln) + L-glutamine + ATP + H2O = L-glutaminyl-tRNA(Gln) + L-glutamate + ADP + phosphate + H(+). Functionally, allows the formation of correctly charged Gln-tRNA(Gln) through the transamidation of misacylated Glu-tRNA(Gln) in organisms which lack glutaminyl-tRNA synthetase. The reaction takes place in the presence of glutamine and ATP through an activated gamma-phospho-Glu-tRNA(Gln). This Leptospira interrogans serogroup Icterohaemorrhagiae serovar copenhageni (strain Fiocruz L1-130) protein is Glutamyl-tRNA(Gln) amidotransferase subunit A.